The primary structure comprises 136 residues: MKFEAFKIVPVGYIRKEKNVFIEILPEFREGMEGLREGDWIKLILWFHKSDTPELRRILKVHPHGNPENPLTGVFATRSPFRPNPYTVKVHKIEGNRIYIDWIDAEDGTPVSDIKIFPERYDCPKENYQSTSRLKS.

The TsaA-like domain maps to 8–126; it reads IVPVGYIRKE…FPERYDCPKE (119 aa). S-adenosyl-L-methionine contacts are provided by residues 48-49, Arg78, and 106-109; these read HK and EDGT.

Belongs to the tRNA methyltransferase O family.

This Pyrococcus horikoshii (strain ATCC 700860 / DSM 12428 / JCM 9974 / NBRC 100139 / OT-3) protein is Probable S-adenosyl-L-methionine-binding protein PH1056.